Consider the following 268-residue polypeptide: Hemin import ATP-binding protein HmuV (268 aa).

One can recognise an ABC transporter domain in the interval 5 to 241; that stretch reads LKAEAASFAL…ELIADVFDVA (237 aa). ATP is bound at residue 37-44; that stretch reads GPNGAGKS.

Belongs to the ABC transporter superfamily. Heme (hemin) importer (TC 3.A.1.14.5) family. In terms of assembly, the complex is composed of two ATP-binding proteins (HmuV), two transmembrane proteins (HmuU) and a solute-binding protein (HmuT).

The protein localises to the cell inner membrane. Functionally, part of the ABC transporter complex HmuTUV involved in hemin import. Responsible for energy coupling to the transport system. In Rhodopseudomonas palustris (strain ATCC BAA-98 / CGA009), this protein is Hemin import ATP-binding protein HmuV.